A 192-amino-acid polypeptide reads, in one-letter code: Protein GrpE (192 aa).

The protein belongs to the GrpE family. Homodimer.

It localises to the cytoplasm. Functionally, participates actively in the response to hyperosmotic and heat shock by preventing the aggregation of stress-denatured proteins, in association with DnaK and GrpE. It is the nucleotide exchange factor for DnaK and may function as a thermosensor. Unfolded proteins bind initially to DnaJ; upon interaction with the DnaJ-bound protein, DnaK hydrolyzes its bound ATP, resulting in the formation of a stable complex. GrpE releases ADP from DnaK; ATP binding to DnaK triggers the release of the substrate protein, thus completing the reaction cycle. Several rounds of ATP-dependent interactions between DnaJ, DnaK and GrpE are required for fully efficient folding. In Neisseria gonorrhoeae (strain NCCP11945), this protein is Protein GrpE.